The sequence spans 813 residues: Calpain-7 (813 aa).

M1 is subject to N-acetylmethionine. Residue T95 is modified to Phosphothreonine. A Calpain catalytic domain is found at 232–540 (RERFAYPMPF…YDVIYLSWNP (309 aa)). Active-site residues include C290, H458, and N478. Positions 541-701 (GLFKESTCIH…INGKWSGQSA (161 aa)) are domain III. The interval 702–813 (GGCGNFQETH…IIPIKITQLQ (112 aa)) is domain N.

Belongs to the peptidase C2 family. Ubiquitous.

It is found in the nucleus. In terms of biological role, calcium-regulated non-lysosomal thiol-protease. The sequence is that of Calpain-7 (CAPN7) from Homo sapiens (Human).